Reading from the N-terminus, the 157-residue chain is Vitamin K-dependent protein C (157 aa).

Residues 1–157 (EKWELDLDIK…GCGRLHNYGV (157 aa)) form the Peptidase S1 domain. Residue Asn-17 is glycosylated (N-linked (GlcNAc...) asparagine). The active-site Charge relay system is the Asp-26. N-linked (GlcNAc...) asparagine glycosylation is present at Asn-78. Cystine bridges form between Cys-96–Cys-110 and Cys-121–Cys-149. Ser-125 functions as the Charge relay system in the catalytic mechanism.

The protein belongs to the peptidase S1 family. Plasma; synthesized in the liver.

Its subcellular location is the secreted. It localises to the golgi apparatus. The protein localises to the endoplasmic reticulum. It catalyses the reaction Degradation of blood coagulation factors Va and VIIIa.. Its function is as follows. Protein C is a vitamin K-dependent serine protease that regulates blood coagulation by inactivating factors Va and VIIIa in the presence of calcium ions and phospholipids. Exerts a protective effect on the endothelial cell barrier function. The protein is Vitamin K-dependent protein C (PROC) of Felis catus (Cat).